Here is a 431-residue protein sequence, read N- to C-terminus: Argininosuccinate lyase (431 aa).

This sequence belongs to the lyase 1 family. Argininosuccinate lyase subfamily.

It is found in the cytoplasm. The enzyme catalyses 2-(N(omega)-L-arginino)succinate = fumarate + L-arginine. It functions in the pathway amino-acid biosynthesis; L-arginine biosynthesis; L-arginine from L-ornithine and carbamoyl phosphate: step 3/3. The polypeptide is Argininosuccinate lyase (Stenotrophomonas maltophilia (strain R551-3)).